A 548-amino-acid chain; its full sequence is Putative F-box protein At1g33020 (548 aa).

One can recognise an F-box domain in the interval 4-53 (AENLDSIPTDLILEIFSRMSTKSIGRCRCVSKLWKSMLGHPYFTELFLTR). Residues 380–404 (KPISPPKQKPKPPSTETSSREDHQG) are disordered. Residues 382-392 (ISPPKQKPKPP) show a composition bias toward pro residues.

This Arabidopsis thaliana (Mouse-ear cress) protein is Putative F-box protein At1g33020.